The chain runs to 392 residues: Digeranylgeranylglycerophospholipid reductase (392 aa).

Glycine 15, glutamate 34, cysteine 45, alanine 46, glycine 48, arginine 99, alanine 123, aspartate 279, glycine 291, and isoleucine 292 together coordinate FAD. Residue valine 370 participates in a 2,3-bis-O-(geranylgeranyl)-sn-glycerol 1-phospholipid binding.

The protein belongs to the geranylgeranyl reductase family. DGGGPL reductase subfamily. It depends on FAD as a cofactor.

The catalysed reaction is a 2,3-bis-O-phytanyl-sn-glycerol 1-phospholipid + 8 oxidized 2[4Fe-4S]-[ferredoxin] = a 2,3-bis-O-(geranylgeranyl)-sn-glycerol 1-phospholipid + 8 reduced 2[4Fe-4S]-[ferredoxin] + 16 H(+). It catalyses the reaction 2,3-bis-O-(phytanyl)-sn-glycerol 1-phosphate + 8 oxidized 2[4Fe-4S]-[ferredoxin] = 2,3-bis-O-(geranylgeranyl)-sn-glycerol 1-phosphate + 8 reduced 2[4Fe-4S]-[ferredoxin] + 16 H(+). It carries out the reaction a 2,3-bis-O-phytanyl-sn-glycerol 1-phospholipid + 8 A = a 2,3-bis-O-(geranylgeranyl)-sn-glycerol 1-phospholipid + 8 AH2. The enzyme catalyses CDP-2,3-bis-O-(geranylgeranyl)-sn-glycerol + 8 AH2 = CDP-2,3-bis-O-(phytanyl)-sn-glycerol + 8 A. The catalysed reaction is archaetidylserine + 8 AH2 = 2,3-bis-O-phytanyl-sn-glycero-3-phospho-L-serine + 8 A. Its pathway is membrane lipid metabolism; glycerophospholipid metabolism. Functionally, is involved in the reduction of 2,3-digeranylgeranylglycerophospholipids (unsaturated archaeols) into 2,3-diphytanylglycerophospholipids (saturated archaeols) in the biosynthesis of archaeal membrane lipids. Catalyzes the formation of archaetidic acid (2,3-di-O-phytanyl-sn-glyceryl phosphate) from 2,3-di-O-geranylgeranylglyceryl phosphate (DGGGP) via the hydrogenation of each double bond of the isoprenoid chains. Is also probably able to reduce double bonds of geranyl groups in CDP-2,3-bis-O-(geranylgeranyl)-sn-glycerol and archaetidylserine, thus acting at various stages in the biosynthesis of archaeal membrane lipids. This Methanocella arvoryzae (strain DSM 22066 / NBRC 105507 / MRE50) protein is Digeranylgeranylglycerophospholipid reductase.